The chain runs to 264 residues: Proliferating cell nuclear antigen 2 (264 aa).

A DNA-binding region spans residues 61–80 (RCDRNLSMGMNLGNMSKMLK).

It belongs to the PCNA family. In terms of assembly, homo- and heterotrimer. Interacts with POLH, ATXR5 and ATXR6.

It localises to the nucleus. Functionally, this protein is an auxiliary protein of DNA polymerase delta and is involved in the control of eukaryotic DNA replication by increasing the polymerase's processibility during elongation of the leading strand. May be involved in UV resistance. In Arabidopsis thaliana (Mouse-ear cress), this protein is Proliferating cell nuclear antigen 2 (PCNA2).